Here is a 564-residue protein sequence, read N- to C-terminus: Mitochondrial distribution and morphology protein 34-1 (564 aa).

In terms of domain architecture, SMP-LTD spans 1–195 (MAFKFNWSPL…LPAIIHRLSL (195 aa)). Polar residues-rich tracts occupy residues 297 to 322 (PDQN…SQTG) and 329 to 352 (DNAS…SSYG). Disordered stretches follow at residues 297 to 408 (PDQN…VTSA), 414 to 433 (HEQP…DQSL), and 452 to 473 (DLSS…PFNT). A compositionally biased stretch (basic residues) spans 359 to 371 (RHSRAHARRRKKR). Positions 383–394 (SDSASVSVSDES) are enriched in low complexity. The span at 396-408 (YTESASAPSVTSA) shows a compositional bias: polar residues. Over residues 452-466 (DLSSEIVRDRAEPSE) the composition is skewed to basic and acidic residues.

It belongs to the MDM34 family. Component of the ER-mitochondria encounter structure (ERMES) or MDM complex, composed of mmm1, mdm10, mdm12 and mdm34.

It localises to the mitochondrion outer membrane. Functionally, component of the ERMES/MDM complex, which serves as a molecular tether to connect the endoplasmic reticulum (ER) and mitochondria. Components of this complex are involved in the control of mitochondrial shape and protein biogenesis, and function in nonvesicular lipid trafficking between the ER and mitochondria. Mdm34 is required for the interaction of the ER-resident membrane protein mmm1 and the outer mitochondrial membrane-resident beta-barrel protein mdm10. This Penicillium rubens (strain ATCC 28089 / DSM 1075 / NRRL 1951 / Wisconsin 54-1255) (Penicillium chrysogenum) protein is Mitochondrial distribution and morphology protein 34-1.